Consider the following 135-residue polypeptide: Transcription antitermination protein NusB (135 aa).

It belongs to the NusB family.

Functionally, involved in transcription antitermination. Required for transcription of ribosomal RNA (rRNA) genes. Binds specifically to the boxA antiterminator sequence of the ribosomal RNA (rrn) operons. The protein is Transcription antitermination protein NusB of Shewanella piezotolerans (strain WP3 / JCM 13877).